A 609-amino-acid polypeptide reads, in one-letter code: Alpha-fetoprotein (609 aa).

Positions Met-1 to Ser-18 are cleaved as a signal peptide. 3 consecutive Albumin domains span residues Arg-19–Thr-210, Lys-211–Gln-402, and Lys-403–Ser-601. Residue His-22 participates in Cu(2+) binding. Intrachain disulfides connect Cys-99–Cys-114, Cys-113–Cys-124, Cys-148–Cys-193, Cys-192–Cys-201, Cys-224–Cys-270, Cys-269–Cys-277, Cys-289–Cys-303, and Cys-302–Cys-313. Residues Ser-111, Ser-115, and Ser-117 each carry the phosphoserine; by FAM20C modification. The N-linked (GlcNAc...) asparagine glycan is linked to Asn-251. At Ser-344 the chain carries Phosphoserine; by FAM20C. Cystine bridges form between Cys-384-Cys-393, Cys-416-Cys-462, Cys-461-Cys-472, Cys-485-Cys-501, Cys-500-Cys-511, Cys-538-Cys-583, and Cys-582-Cys-591. A phosphoserine; by FAM20C mark is found at Ser-444 and Ser-445.

It belongs to the ALB/AFP/VDB family. Dimeric and trimeric forms have been found in addition to the monomeric form. In terms of processing, independent studies suggest heterogeneity of the N-terminal sequence of the mature protein and of the cleavage site of the signal sequence. Sulfated. In terms of tissue distribution, plasma. Synthesized by the fetal liver and yolk sac.

It localises to the secreted. Binds copper, nickel, and fatty acids as well as, and bilirubin less well than, serum albumin. Only a small percentage (less than 2%) of the human AFP shows estrogen-binding properties. The polypeptide is Alpha-fetoprotein (AFP) (Homo sapiens (Human)).